Reading from the N-terminus, the 392-residue chain is Pyruvate synthase subunit PorA (392 aa).

In terms of assembly, heterotetramer of one alpha, one beta, one delta and one gamma chain.

It carries out the reaction 2 oxidized [2Fe-2S]-[ferredoxin] + pyruvate + CoA = 2 reduced [2Fe-2S]-[ferredoxin] + acetyl-CoA + CO2 + H(+). The chain is Pyruvate synthase subunit PorA (porA) from Thermotoga maritima (strain ATCC 43589 / DSM 3109 / JCM 10099 / NBRC 100826 / MSB8).